Reading from the N-terminus, the 1243-residue chain is ATP-dependent helicase/nuclease subunit A (1243 aa).

Positions 2-475 constitute a UvrD-like helicase ATP-binding domain; the sequence is VNWTKEQEEA…IDLARNFRSR (474 aa). 23 to 30 is a binding site for ATP; sequence AAAGSGKT. Positions 502 to 803 constitute a UvrD-like helicase C-terminal domain; sequence AAELIYGNKM…RIMTIHKSKG (302 aa).

It belongs to the helicase family. AddA subfamily. In terms of assembly, heterodimer of AddA and AddB/RexB. It depends on Mg(2+) as a cofactor.

It carries out the reaction Couples ATP hydrolysis with the unwinding of duplex DNA by translocating in the 3'-5' direction.. The enzyme catalyses ATP + H2O = ADP + phosphate + H(+). Its function is as follows. The heterodimer acts as both an ATP-dependent DNA helicase and an ATP-dependent, dual-direction single-stranded exonuclease. Recognizes the chi site generating a DNA molecule suitable for the initiation of homologous recombination. The AddA nuclease domain is required for chi fragment generation; this subunit has the helicase and 3' -&gt; 5' nuclease activities. The polypeptide is ATP-dependent helicase/nuclease subunit A (Oceanobacillus iheyensis (strain DSM 14371 / CIP 107618 / JCM 11309 / KCTC 3954 / HTE831)).